The chain runs to 253 residues: Ubiquinone/menaquinone biosynthesis C-methyltransferase UbiE (253 aa).

Residues Thr76, Asp97, 125-126 (NA), and Ser142 each bind S-adenosyl-L-methionine.

It belongs to the class I-like SAM-binding methyltransferase superfamily. MenG/UbiE family.

It carries out the reaction a 2-demethylmenaquinol + S-adenosyl-L-methionine = a menaquinol + S-adenosyl-L-homocysteine + H(+). It catalyses the reaction a 2-methoxy-6-(all-trans-polyprenyl)benzene-1,4-diol + S-adenosyl-L-methionine = a 5-methoxy-2-methyl-3-(all-trans-polyprenyl)benzene-1,4-diol + S-adenosyl-L-homocysteine + H(+). It participates in quinol/quinone metabolism; menaquinone biosynthesis; menaquinol from 1,4-dihydroxy-2-naphthoate: step 2/2. Its pathway is cofactor biosynthesis; ubiquinone biosynthesis. Methyltransferase required for the conversion of demethylmenaquinol (DMKH2) to menaquinol (MKH2) and the conversion of 2-polyprenyl-6-methoxy-1,4-benzoquinol (DDMQH2) to 2-polyprenyl-3-methyl-6-methoxy-1,4-benzoquinol (DMQH2). The sequence is that of Ubiquinone/menaquinone biosynthesis C-methyltransferase UbiE from Xylella fastidiosa (strain 9a5c).